A 239-amino-acid polypeptide reads, in one-letter code: MAYQSLRLEYLQIPPVSRAYTTACVLTTAAVQLELITPFQLYFNPELIFKHFQIWRLITNFLFFGPVGFNFLFNMIFLYRYCRMLEEGSFRGRTADFVFMFLFGGFLMTLFGLFVSLVFLGQAFTIMLVYVWSRRNPYVRMNFFGLLNFQAPFLPWVLMGFSLLLGNSIIVDLLGIAVGHIYFFLEDIFPNQPGGIRILKTPSILRTIFDTPDEDPNYNPLPEERPGGFAWGEGQRLGG.

Over Met1–Leu57 the chain is Cytoplasmic. The helical transmembrane segment at Ile58–Leu78 threads the bilayer. Topologically, residues Tyr79–Asp96 are lumenal. The helical transmembrane segment at Phe97–Leu117 threads the bilayer. At Val118–Gln150 the chain is on the cytoplasmic side. A helical transmembrane segment spans residues Ala151–Val171. Residue Asp172 is a topological domain, lumenal. Residues Leu173–Pro193 form a helical membrane-spanning segment. The Cytoplasmic portion of the chain corresponds to Gly194 to Gly239. The disordered stretch occupies residues Glu214–Gly239. Gly residues predominate over residues Phe229–Gly239.

Belongs to the derlin family. As to quaternary structure, forms homo- and heterooligomers with DERL3 and, to a lesser extent, with DERL1. Interacts with the SEL1L/SYVN1 and VCP/SELENOS protein complexes. Mediates association between VCP and EDEM1, as well as that between VCP and the misfolded glycoproteins. Interacts with OS9. Interacts with SELENOK and SELENOS. Interacts with the signal recognition particle/SRP and the SRP receptor; in the process of endoplasmic reticulum stress-induced pre-emptive quality control. Interacts with CCDC47. As to expression, widely expressed, with lowest levels in brain and heart.

The protein resides in the endoplasmic reticulum membrane. Functionally, functional component of endoplasmic reticulum-associated degradation (ERAD) for misfolded lumenal glycoproteins, but not that of misfolded nonglycoproteins. May act by forming a channel that allows the retrotranslocation of misfolded glycoproteins into the cytosol where they are ubiquitinated and degraded by the proteasome. May mediate the interaction between VCP and misfolded glycoproteins. May also be involved in endoplasmic reticulum stress-induced pre-emptive quality control, a mechanism that selectively attenuates the translocation of newly synthesized proteins into the endoplasmic reticulum and reroutes them to the cytosol for proteasomal degradation. This chain is Derlin-2, found in Mus musculus (Mouse).